The primary structure comprises 222 residues: uncharacterized protein (222 aa).

The disordered stretch occupies residues 142 to 222; sequence ARRGGCVHPP…LPDPPSAGHL (81 aa). A compositionally biased stretch (low complexity) spans 160–169; sequence QSRSISSRRA. Residues 182 to 196 show a composition bias toward basic residues; it reads PRRRPHRHRTRPQTR.

This sequence belongs to the Rv1128c/1148c/1588c/1702c/1945/3466 family.

This is an uncharacterized protein from Mycobacterium tuberculosis (strain ATCC 25618 / H37Rv).